The chain runs to 219 residues: Orotate phosphoribosyltransferase (219 aa).

Lysine 26 contributes to the 5-phospho-alpha-D-ribose 1-diphosphate binding site. 34-35 (FF) is a binding site for orotate. Residues 72–73 (YK), arginine 98, lysine 99, lysine 102, histidine 104, and 124–132 (DDVITAGTA) contribute to the 5-phospho-alpha-D-ribose 1-diphosphate site. Residues threonine 128 and arginine 156 each contribute to the orotate site.

This sequence belongs to the purine/pyrimidine phosphoribosyltransferase family. PyrE subfamily. Homodimer. Mg(2+) is required as a cofactor.

It carries out the reaction orotidine 5'-phosphate + diphosphate = orotate + 5-phospho-alpha-D-ribose 1-diphosphate. The protein operates within pyrimidine metabolism; UMP biosynthesis via de novo pathway; UMP from orotate: step 1/2. Its function is as follows. Catalyzes the transfer of a ribosyl phosphate group from 5-phosphoribose 1-diphosphate to orotate, leading to the formation of orotidine monophosphate (OMP). The sequence is that of Orotate phosphoribosyltransferase from Xanthomonas axonopodis pv. citri (strain 306).